We begin with the raw amino-acid sequence, 312 residues long: Aspartate carbamoyltransferase catalytic subunit (312 aa).

Carbamoyl phosphate contacts are provided by R54 and T55. K83 provides a ligand contact to L-aspartate. Positions 104, 132, and 135 each coordinate carbamoyl phosphate. Residues R165 and R226 each contribute to the L-aspartate site. 2 residues coordinate carbamoyl phosphate: L263 and P264.

The protein belongs to the aspartate/ornithine carbamoyltransferase superfamily. ATCase family. In terms of assembly, heterooligomer of catalytic and regulatory chains.

The enzyme catalyses carbamoyl phosphate + L-aspartate = N-carbamoyl-L-aspartate + phosphate + H(+). It participates in pyrimidine metabolism; UMP biosynthesis via de novo pathway; (S)-dihydroorotate from bicarbonate: step 2/3. Functionally, catalyzes the condensation of carbamoyl phosphate and aspartate to form carbamoyl aspartate and inorganic phosphate, the committed step in the de novo pyrimidine nucleotide biosynthesis pathway. This is Aspartate carbamoyltransferase catalytic subunit from Methanothermobacter thermautotrophicus (strain ATCC 29096 / DSM 1053 / JCM 10044 / NBRC 100330 / Delta H) (Methanobacterium thermoautotrophicum).